The primary structure comprises 105 residues: Large ribosomal subunit protein uL24 (105 aa).

Belongs to the universal ribosomal protein uL24 family. As to quaternary structure, part of the 50S ribosomal subunit.

One of two assembly initiator proteins, it binds directly to the 5'-end of the 23S rRNA, where it nucleates assembly of the 50S subunit. Its function is as follows. One of the proteins that surrounds the polypeptide exit tunnel on the outside of the subunit. In Methylobacillus flagellatus (strain ATCC 51484 / DSM 6875 / VKM B-1610 / KT), this protein is Large ribosomal subunit protein uL24.